Consider the following 225-residue polypeptide: Peptidyl-tRNA hydrolase (225 aa).

Position 27 (Tyr-27) interacts with tRNA. His-32 serves as the catalytic Proton acceptor. Tyr-78, Asn-80, and Asn-126 together coordinate tRNA. Residues 198–225 form a disordered region; the sequence is FNPLDFSGPDRQDQPAPLNPAKTAPGES.

This sequence belongs to the PTH family. Monomer.

The protein resides in the cytoplasm. It carries out the reaction an N-acyl-L-alpha-aminoacyl-tRNA + H2O = an N-acyl-L-amino acid + a tRNA + H(+). In terms of biological role, hydrolyzes ribosome-free peptidyl-tRNAs (with 1 or more amino acids incorporated), which drop off the ribosome during protein synthesis, or as a result of ribosome stalling. Its function is as follows. Catalyzes the release of premature peptidyl moieties from peptidyl-tRNA molecules trapped in stalled 50S ribosomal subunits, and thus maintains levels of free tRNAs and 50S ribosomes. The protein is Peptidyl-tRNA hydrolase of Synechococcus sp. (strain JA-3-3Ab) (Cyanobacteria bacterium Yellowstone A-Prime).